The primary structure comprises 470 residues: NADH-quinone oxidoreductase subunit D (470 aa).

The span at Met1–Thr18 shows a compositional bias: low complexity. The segment at Met1–Ala37 is disordered.

This sequence belongs to the complex I 49 kDa subunit family. As to quaternary structure, NDH-1 is composed of 14 different subunits. Subunits NuoB, C, D, E, F, and G constitute the peripheral sector of the complex.

Its subcellular location is the cell membrane. The enzyme catalyses a quinone + NADH + 5 H(+)(in) = a quinol + NAD(+) + 4 H(+)(out). In terms of biological role, NDH-1 shuttles electrons from NADH, via FMN and iron-sulfur (Fe-S) centers, to quinones in the respiratory chain. The immediate electron acceptor for the enzyme in this species is believed to be a menaquinone. Couples the redox reaction to proton translocation (for every two electrons transferred, four hydrogen ions are translocated across the cytoplasmic membrane), and thus conserves the redox energy in a proton gradient. The sequence is that of NADH-quinone oxidoreductase subunit D from Frankia alni (strain DSM 45986 / CECT 9034 / ACN14a).